The following is a 505-amino-acid chain: Aspartyl/glutamyl-tRNA(Asn/Gln) amidotransferase subunit B (505 aa).

Belongs to the GatB/GatE family. GatB subfamily. Heterotrimer of A, B and C subunits.

It carries out the reaction L-glutamyl-tRNA(Gln) + L-glutamine + ATP + H2O = L-glutaminyl-tRNA(Gln) + L-glutamate + ADP + phosphate + H(+). The catalysed reaction is L-aspartyl-tRNA(Asn) + L-glutamine + ATP + H2O = L-asparaginyl-tRNA(Asn) + L-glutamate + ADP + phosphate + 2 H(+). Allows the formation of correctly charged Asn-tRNA(Asn) or Gln-tRNA(Gln) through the transamidation of misacylated Asp-tRNA(Asn) or Glu-tRNA(Gln) in organisms which lack either or both of asparaginyl-tRNA or glutaminyl-tRNA synthetases. The reaction takes place in the presence of glutamine and ATP through an activated phospho-Asp-tRNA(Asn) or phospho-Glu-tRNA(Gln). This is Aspartyl/glutamyl-tRNA(Asn/Gln) amidotransferase subunit B from Dinoroseobacter shibae (strain DSM 16493 / NCIMB 14021 / DFL 12).